The chain runs to 118 residues: Ribulose bisphosphate carboxylase small subunit 2 (118 aa).

This sequence belongs to the RuBisCO small chain family. As to quaternary structure, heterohexadecamer of 8 large and 8 small subunits.

Its function is as follows. RuBisCO catalyzes two reactions: the carboxylation of D-ribulose 1,5-bisphosphate, the primary event in carbon dioxide fixation, as well as the oxidative fragmentation of the pentose substrate. Both reactions occur simultaneously and in competition at the same active site. Although the small subunit is not catalytic it is essential for maximal activity. The polypeptide is Ribulose bisphosphate carboxylase small subunit 2 (Acidithiobacillus ferrooxidans (Thiobacillus ferrooxidans)).